Reading from the N-terminus, the 642-residue chain is 1,4-alpha-glucan branching enzyme GlgB (642 aa).

Aspartate 304 acts as the Nucleophile in catalysis. Glutamate 355 serves as the catalytic Proton donor.

This sequence belongs to the glycosyl hydrolase 13 family. GlgB subfamily. Monomer.

It carries out the reaction Transfers a segment of a (1-&gt;4)-alpha-D-glucan chain to a primary hydroxy group in a similar glucan chain.. It participates in glycan biosynthesis; glycogen biosynthesis. Its function is as follows. Catalyzes the formation of the alpha-1,6-glucosidic linkages in glycogen by scission of a 1,4-alpha-linked oligosaccharide from growing alpha-1,4-glucan chains and the subsequent attachment of the oligosaccharide to the alpha-1,6 position. The protein is 1,4-alpha-glucan branching enzyme GlgB of Streptococcus pneumoniae serotype 2 (strain D39 / NCTC 7466).